The following is a 361-amino-acid chain: Mitogen-activated protein kinase 14 (361 aa).

In terms of domain architecture, Protein kinase spans 32 to 316 (YVPIKPIGRG…VSDALLHPYM (285 aa)). ATP is bound by residues 38-46 (IGRGAYGVV) and lysine 61. Catalysis depends on aspartate 158, which acts as the Proton acceptor. Threonine 188 carries the phosphothreonine modification. The short motif at 188–190 (TEY) is the TXY element. Position 190 is a phosphotyrosine (tyrosine 190). Threonine 193 carries the post-translational modification Phosphothreonine.

Belongs to the protein kinase superfamily. CMGC Ser/Thr protein kinase family. MAP kinase subfamily. Interacts with MKK3. Post-translationally, dually phosphorylated on Thr-188 and Tyr-190, which activates the enzyme.

It carries out the reaction L-seryl-[protein] + ATP = O-phospho-L-seryl-[protein] + ADP + H(+). The catalysed reaction is L-threonyl-[protein] + ATP = O-phospho-L-threonyl-[protein] + ADP + H(+). With respect to regulation, activated by threonine and tyrosine phosphorylation. This Arabidopsis thaliana (Mouse-ear cress) protein is Mitogen-activated protein kinase 14 (MPK14).